A 761-amino-acid chain; its full sequence is Subtilisin-like protease SBT3 (761 aa).

An N-terminal signal peptide occupies residues 1–22 (MELLHLLLFSWALSAHLFLALA). Residues 23-112 (QRSTYIVHLD…AYKDRTVEPH (90 aa)) constitute a propeptide that is removed on maturation. An Inhibitor I9 domain is found at 26-110 (TYIVHLDKSL…ISAYKDRTVE (85 aa)). Residues 116–606 (TSDFLKLNPS…AGHVDPNRAL (491 aa)) enclose the Peptidase S8 domain. The active-site Charge relay system is the aspartate 144. Cysteines 170 and 181 form a disulfide. N-linked (GlcNAc...) (complex) asparagine; alternate glycosylation is found at asparagine 177 and asparagine 203. N-linked (GlcNAc...) (paucimannose) asparagine; alternate glycosylation is found at asparagine 177 and asparagine 203. Histidine 215 serves as the catalytic Charge relay system. Residue asparagine 376 is glycosylated (N-linked (GlcNAc...) (paucimannose) asparagine; partial). A disulfide bridge links cysteine 382 with cysteine 401. Serine 538 functions as the Charge relay system in the catalytic mechanism. Residues 574-598 (LDNTRKPIKDSDNNKAATPLDMGAG) form a disordered region. Positions 575-586 (DNTRKPIKDSDN) are enriched in basic and acidic residues. A disulfide bond links cysteine 624 and cysteine 645. N-linked (GlcNAc...) (complex) asparagine; alternate glycans are attached at residues asparagine 697 and asparagine 745. Residues asparagine 697 and asparagine 745 are each glycosylated (N-linked (GlcNAc...) (paucimannose) asparagine; alternate). The interval 756-761 (PIIEVW) is necessary for prodomain cleavage and secretion.

This sequence belongs to the peptidase S8 family. As to quaternary structure, homodimer. Post-translationally, propeptide is internally cleaved at Asn-38 and Asp-52 in a pH-dependent manner leading to the dissociation of the propeptide from the catalytic domain and resulting in the release of the active subtilase. Cleavage occurs at pH 5.7 and to a stronger extent at pH 5.2. As to expression, expressed in flowers, cotyledons and leaves with the highest expression in roots.

Its subcellular location is the secreted. Its activity is regulated as follows. Inhibited by 1 mM 4-(2-aminoethyl)-benzenesulfonyl fluoride (AEBSF), a general inhibitor of serine proteinases, but not by the more selective serine protease inhibitors N-alpha-tosyl-L-lysinyl-chloromethylketone (TLCK), N-tosyl-L-phenylalaninyl-chloromethylketone (TPCK), leupeptin, aprotinin or benzamidine. Its proteolytic activity is autoinhibited by the non-covalent binding of the propeptide to the catalytic domain. No effect on activity by the addition of CaCl(2) or calcium chelators. Its function is as follows. Serine protease. Has preference for Gln in the P1 position and Lys in the P2 position of oligopeptide substrates. Active also with His in the P1 position. Involved in resistance against insects partly by regulating expression of systemic wound response genes and possibly by its post-ingestive activity in the insect gut. Apart from the role in defense, may be involved in regulation of pectin methylesterases (PMEs) activity and pectin methylesterification of the cell wall. This chain is Subtilisin-like protease SBT3, found in Solanum lycopersicum (Tomato).